We begin with the raw amino-acid sequence, 594 residues long: UvrABC system protein C (594 aa).

A GIY-YIG domain is found at 14-91 (DQPGCYLMKD…IKKYDPKYNI (78 aa)). Positions 196-231 (KEVRSELEIKMYEASEKLEFERAKELRDQIAHIDAI) constitute a UVR domain.

This sequence belongs to the UvrC family. As to quaternary structure, interacts with UvrB in an incision complex.

It localises to the cytoplasm. The UvrABC repair system catalyzes the recognition and processing of DNA lesions. UvrC both incises the 5' and 3' sides of the lesion. The N-terminal half is responsible for the 3' incision and the C-terminal half is responsible for the 5' incision. This Bacillus cereus (strain G9842) protein is UvrABC system protein C.